A 252-amino-acid chain; its full sequence is N-acetylglucosaminyl-phosphatidylinositol de-N-acetylase (252 aa).

The helical transmembrane segment at 2–22 (EVVGLLCVAVAVLTWGFLRVW) threads the bilayer. Over 23–252 (NSAERMRSPE…YMSVNSLQLL (230 aa)) the chain is Cytoplasmic.

It belongs to the PIGL family.

Its subcellular location is the endoplasmic reticulum membrane. It catalyses the reaction a 6-(N-acetyl-alpha-D-glucosaminyl)-1-(1,2-diacyl-sn-glycero-3-phospho)-1D-myo-inositol + H2O = a 6-(alpha-D-glucosaminyl)-1-(1,2-diacyl-sn-glycero-3-phospho)-1D-myo-inositol + acetate. Its pathway is glycolipid biosynthesis; glycosylphosphatidylinositol-anchor biosynthesis. Its function is as follows. Catalyzes the second step of glycosylphosphatidylinositol (GPI) biosynthesis, which is the de-N-acetylation of N-acetylglucosaminyl-phosphatidylinositol. This Rattus norvegicus (Rat) protein is N-acetylglucosaminyl-phosphatidylinositol de-N-acetylase (Pigl).